Consider the following 517-residue polypeptide: Ribonuclease Y (517 aa).

The chain crosses the membrane as a helical span at residues 1–21 (MIESLIALIAAIVGLGIGYLV). Positions 207 to 273 (LINVINIKND…TKVIELLVED (67 aa)) constitute a KH domain. Positions 333-426 (ALAHSLEVAH…VCAADTLSAA (94 aa)) constitute an HD domain.

Belongs to the RNase Y family.

The protein localises to the cell membrane. Its function is as follows. Endoribonuclease that initiates mRNA decay. The sequence is that of Ribonuclease Y from Campylobacter jejuni subsp. jejuni serotype O:6 (strain 81116 / NCTC 11828).